We begin with the raw amino-acid sequence, 659 residues long: DNA helicase/primase complex-associated protein (659 aa).

The protein belongs to the herpesviridae HEPA family. As to quaternary structure, associates with the primase and the helicase to form the helicase-primase complex. Interacts with the origin-binding protein. Interacts with the polymerase catalytic subunit.

The protein localises to the host nucleus. Functionally, component of the helicase/primase complex. Unwinds the DNA at the replication forks and generates single-stranded DNA for both leading and lagging strand synthesis. The primase synthesizes short RNA primers on the lagging strand that the polymerase presumably elongates using dNTPs. The primase-associated factor has no known catalytic activity in the complex and may serve to facilitate the formation of the replisome by directly interacting with the origin-binding protein and the polymerase. The sequence is that of DNA helicase/primase complex-associated protein (U74) from Human herpesvirus 7 (strain JI) (HHV-7).